We begin with the raw amino-acid sequence, 138 residues long: Large ribosomal subunit protein uL16 (138 aa).

Over residues 1 to 17 (MLIPRKVKHRKQHHPRQ) the composition is skewed to basic residues. The segment at 1 to 24 (MLIPRKVKHRKQHHPRQRGIASGG) is disordered.

Belongs to the universal ribosomal protein uL16 family. Part of the 50S ribosomal subunit.

In terms of biological role, binds 23S rRNA and is also seen to make contacts with the A and possibly P site tRNAs. The protein is Large ribosomal subunit protein uL16 of Mycobacterium ulcerans (strain Agy99).